The following is a 430-amino-acid chain: Adenylosuccinate synthetase (430 aa).

GTP is bound by residues 11–17 (GDEGKGK) and 39–41 (GHS). Asp12 serves as the catalytic Proton acceptor. Mg(2+)-binding residues include Asp12 and Gly39. Residues 12-15 (DEGK), 37-40 (NAGH), Thr129, Arg143, Asn221, Thr236, and Arg300 each bind IMP. His40 (proton donor) is an active-site residue. Residue 296 to 302 (VSTGRKR) participates in substrate binding. GTP contacts are provided by residues Arg302, 328–330 (KLD), and 412–414 (GTG).

The protein belongs to the adenylosuccinate synthetase family. In terms of assembly, homodimer. Mg(2+) is required as a cofactor.

The protein resides in the cytoplasm. The enzyme catalyses IMP + L-aspartate + GTP = N(6)-(1,2-dicarboxyethyl)-AMP + GDP + phosphate + 2 H(+). The protein operates within purine metabolism; AMP biosynthesis via de novo pathway; AMP from IMP: step 1/2. Plays an important role in the de novo pathway and in the salvage pathway of purine nucleotide biosynthesis. Catalyzes the first committed step in the biosynthesis of AMP from IMP. The chain is Adenylosuccinate synthetase from Sordaria macrospora (strain ATCC MYA-333 / DSM 997 / K(L3346) / K-hell).